The primary structure comprises 115 residues: MTDTIVNVQGSFFSASASGVADTESLLIDPQDAKFGAIEIHNIAHGGSVDVELLTSSDDTELVEDAAVTLDSFTGEGISQGNQIEASDNTNTYIRITNTSGGAIDIIATGREVSQ.

This Haloferax tailed virus 1 (HFTV1) protein is Gp30.